The primary structure comprises 373 residues: Core trichothecene cluster (CTC) protein 14 (373 aa).

It belongs to the TRI14 family.

Its function is as follows. Part of the core gene cluster that mediates the biosynthesis of trichothecenes, a very large family of chemically related bicyclic sesquiterpene compounds acting as mycotoxins, including T2-toxin. The biosynthesis of trichothecenes begins with the cyclization of farnesyl diphosphate to trichodiene and is catalyzed by the trichodiene synthase TRI5. Trichodiene undergoes a series of oxygenations catalyzed by the cytochrome P450 monooxygenase TRI4. TRI4 controls the addition of four oxygens at C-2, C-3, C-11, and the C-12, C-13-epoxide to form the intermediate isotrichotriol. Isotrichotriol then undergoes a non-enzymatic isomerization and cyclization to form isotrichodermol. During this process, the oxygen at the C-2 position becomes the pyran ring oxygen and the hydroxyl group at C-11 is lost. More complex type A trichothecenes are built by modifying isotrichodermol through a series of paired hydroxylation and acetylation or acylation steps. Isotrichodermol is converted to isotrichodermin by the acetyltransferase TRI101. TRI101 encodes a C-3 transacetylase that acts as a self-protection or resistance factor during biosynthesis and that the presence of a free C-3 hydroxyl group is a key component of Fusarium trichothecene phytotoxicity. A second hydroxyl group is added to C-15 by the trichothecene C-15 hydroxylase TRI11, producing 15-decalonectrin, which is then acetylated by TRI3, producing calonectrin. A third hydroxyl group is added at C-4 by the cytochrome P450 monooxygenase TRI13, converting calonectrin to 3,15-diacetoxyspirpenol, which is subsequently acetylated bythe acetyltransferase TRI7. A fourth hydroxyl group is added to C-8 by the cytochrome P450 monooxygenase TRI1, followed by the addition of an isovaleryl moiety by TRI16. Finally, the acetyl group is removed from the C-3 position by the trichothecene C-3 esterase TRI8 to produce T-2 toxin. The protein is Core trichothecene cluster (CTC) protein 14 of Fusarium sporotrichioides.